Consider the following 236-residue polypeptide: Small ribosomal subunit protein uS2c (236 aa).

Belongs to the universal ribosomal protein uS2 family.

The protein localises to the plastid. It is found in the chloroplast. The protein is Small ribosomal subunit protein uS2c (rps2) of Crucihimalaya wallichii (Rock-cress).